The following is a 95-amino-acid chain: Large ribosomal subunit protein bL25 (95 aa).

This sequence belongs to the bacterial ribosomal protein bL25 family. As to quaternary structure, part of the 50S ribosomal subunit; part of the 5S rRNA/L5/L18/L25 subcomplex. Contacts the 5S rRNA. Binds to the 5S rRNA independently of L5 and L18.

Functionally, this is one of the proteins that binds to the 5S RNA in the ribosome where it forms part of the central protuberance. This is Large ribosomal subunit protein bL25 from Chromobacterium violaceum (strain ATCC 12472 / DSM 30191 / JCM 1249 / CCUG 213 / NBRC 12614 / NCIMB 9131 / NCTC 9757 / MK).